Here is a 311-residue protein sequence, read N- to C-terminus: Aspartate carbamoyltransferase catalytic subunit (311 aa).

Residues Arg-59 and Thr-60 each contribute to the carbamoyl phosphate site. L-aspartate is bound at residue Lys-87. Carbamoyl phosphate contacts are provided by Arg-109, His-139, and Gln-142. L-aspartate is bound by residues Arg-172 and Arg-224. Residues Ala-265 and Pro-266 each contribute to the carbamoyl phosphate site.

This sequence belongs to the aspartate/ornithine carbamoyltransferase superfamily. ATCase family. As to quaternary structure, heterododecamer (2C3:3R2) of six catalytic PyrB chains organized as two trimers (C3), and six regulatory PyrI chains organized as three dimers (R2).

It carries out the reaction carbamoyl phosphate + L-aspartate = N-carbamoyl-L-aspartate + phosphate + H(+). The protein operates within pyrimidine metabolism; UMP biosynthesis via de novo pathway; (S)-dihydroorotate from bicarbonate: step 2/3. Functionally, catalyzes the condensation of carbamoyl phosphate and aspartate to form carbamoyl aspartate and inorganic phosphate, the committed step in the de novo pyrimidine nucleotide biosynthesis pathway. The protein is Aspartate carbamoyltransferase catalytic subunit of Streptococcus equi subsp. equi (strain 4047).